Consider the following 539-residue polypeptide: CTP synthase (539 aa).

Residues 1–268 (MSFKSIFLTG…SDFLLNKLGF (268 aa)) are amidoligase domain. CTP is bound at residue serine 14. A UTP-binding site is contributed by serine 14. 15 to 20 (SLGKGL) is a binding site for ATP. Position 55 (tyrosine 55) interacts with L-glutamine. Aspartate 72 serves as a coordination point for ATP. 2 residues coordinate Mg(2+): aspartate 72 and glutamate 142. Residues 149 to 151 (DIE), 188 to 193 (KTKPTQ), and lysine 224 contribute to the CTP site. Residues 188-193 (KTKPTQ) and lysine 224 contribute to the UTP site. Leucine 242 contacts ATP. Residues 294–532 (RIGLVGKYLE…IRAAKAYSLE (239 aa)) form the Glutamine amidotransferase type-1 domain. Glycine 353 is a binding site for L-glutamine. Cysteine 380 serves as the catalytic Nucleophile; for glutamine hydrolysis. L-glutamine-binding positions include 381–384 (LGMQ), glutamate 404, and arginine 460. Catalysis depends on residues histidine 505 and glutamate 507.

Belongs to the CTP synthase family. In terms of assembly, homotetramer.

The catalysed reaction is UTP + L-glutamine + ATP + H2O = CTP + L-glutamate + ADP + phosphate + 2 H(+). It carries out the reaction L-glutamine + H2O = L-glutamate + NH4(+). It catalyses the reaction UTP + NH4(+) + ATP = CTP + ADP + phosphate + 2 H(+). It functions in the pathway pyrimidine metabolism; CTP biosynthesis via de novo pathway; CTP from UDP: step 2/2. Its activity is regulated as follows. Allosterically activated by GTP, when glutamine is the substrate; GTP has no effect on the reaction when ammonia is the substrate. The allosteric effector GTP functions by stabilizing the protein conformation that binds the tetrahedral intermediate(s) formed during glutamine hydrolysis. Inhibited by the product CTP, via allosteric rather than competitive inhibition. In terms of biological role, catalyzes the ATP-dependent amination of UTP to CTP with either L-glutamine or ammonia as the source of nitrogen. May be involved in lipopolysaccharide biosynthesis, potentially channelling CTP directly to CMP-KDO synthetase. Regulates intracellular CTP levels through interactions with the four ribonucleotide triphosphates. The sequence is that of CTP synthase from Chlamydia trachomatis serovar D (strain ATCC VR-885 / DSM 19411 / UW-3/Cx).